The sequence spans 679 residues: Methionine--tRNA ligase (679 aa).

Positions 15–25 match the 'HIGH' region motif; the sequence is PYANGPVHIGH. The Zn(2+) site is built by Cys-147, Cys-150, Cys-160, and Cys-163. Positions 332–336 match the 'KMSKS' region motif; that stretch reads KISTS. Thr-335 is an ATP binding site. One can recognise a tRNA-binding domain in the interval 578–679; sequence DFMKLDIRVG…REVKPGSEVK (102 aa).

This sequence belongs to the class-I aminoacyl-tRNA synthetase family. MetG type 1 subfamily. As to quaternary structure, homodimer. Requires Zn(2+) as cofactor.

The protein localises to the cytoplasm. It catalyses the reaction tRNA(Met) + L-methionine + ATP = L-methionyl-tRNA(Met) + AMP + diphosphate. In terms of biological role, is required not only for elongation of protein synthesis but also for the initiation of all mRNA translation through initiator tRNA(fMet) aminoacylation. The protein is Methionine--tRNA ligase of Bacteroides fragilis (strain ATCC 25285 / DSM 2151 / CCUG 4856 / JCM 11019 / LMG 10263 / NCTC 9343 / Onslow / VPI 2553 / EN-2).